The sequence spans 89 residues: Small ribosomal subunit protein uS15 (89 aa).

It belongs to the universal ribosomal protein uS15 family. As to quaternary structure, part of the 30S ribosomal subunit. Forms a bridge to the 50S subunit in the 70S ribosome, contacting the 23S rRNA.

One of the primary rRNA binding proteins, it binds directly to 16S rRNA where it helps nucleate assembly of the platform of the 30S subunit by binding and bridging several RNA helices of the 16S rRNA. In terms of biological role, forms an intersubunit bridge (bridge B4) with the 23S rRNA of the 50S subunit in the ribosome. In Zymomonas mobilis subsp. mobilis (strain ATCC 31821 / ZM4 / CP4), this protein is Small ribosomal subunit protein uS15.